The primary structure comprises 346 residues: MTPNGSRRHSAYMGSPRSQHSSTMETGYNPYEAVQKKQELYQNNNGNSPTVIIEEDPYIPNYKESSLANKKTNYNMKIVVVGDGGCGKTCLLLAYTQNKFPSIYVPTVFENYVTAVQSPNGKTVELALWDTAGQEEYDRLRPLSYPDVDILLVCFAVDNEVSLENVKDMWFPEVNHYCPGIPIILVGTKSDLSSDMNHDASIRVAKEIGAIGLIFTSAKTMFNVRTVFNFALNHFQRNMELQEQYEKTLGSRKRISRVLGGSNGGSGNHSRHHSRNYSNVSNNRRGHLKNTSYDSTALLDQPLTEDTYVKNPYGNFGYKANVESPYNQDEFAFTRERKKKKKCVIL.

Over residues 1-10 (MTPNGSRRHS) the composition is skewed to basic residues. The interval 1–25 (MTPNGSRRHSAYMGSPRSQHSSTME) is disordered. Residues 16-25 (PRSQHSSTME) show a composition bias toward polar residues. A GTP-binding site is contributed by 82–89 (GDGGCGKT). An Effector region motif is present at residues 104–112 (YVPTVFENY). Residues 130–134 (DTAGQ) and 188–191 (TKSD) each bind GTP. The tract at residues 259 to 294 (LGGSNGGSGNHSRHHSRNYSNVSNNRRGHLKNTSYD) is disordered. Cysteine methyl ester is present on cysteine 343. Residue cysteine 343 is the site of S-geranylgeranyl cysteine attachment. The propeptide at 344–346 (VIL) is removed in mature form.

Belongs to the small GTPase superfamily. Rho family.

The protein resides in the cell membrane. The chain is GTP-binding RHO-like protein (CRL1) from Candida albicans (strain WO-1) (Yeast).